The sequence spans 245 residues: MKKIDLNADIAEGFPFDESLLQLLSSANIACGLHAGGAKEMQSAVKFAKENKVRIGAHPSFPDRENFGRTAMALSSQELIAHLRYQLGALKAICDGEGAVISYVKPHGALYNQAAKDEKIARVIAQTVYQFDPHLKLMGLAGSLMLCIAEEEKLQTISEVFADRHYMPDGSLVPRSQPNAMVESDKEAIQQVLQMVTKGQVNAIDGSLVPVKAESICLHGDNQHSLQFAKRIVEELEKNHIKITA.

The protein belongs to the LamB/PxpA family. Forms a complex composed of PxpA, PxpB and PxpC.

It carries out the reaction 5-oxo-L-proline + ATP + 2 H2O = L-glutamate + ADP + phosphate + H(+). Functionally, catalyzes the cleavage of 5-oxoproline to form L-glutamate coupled to the hydrolysis of ATP to ADP and inorganic phosphate. The protein is 5-oxoprolinase subunit A of Haemophilus influenzae (strain PittGG).